We begin with the raw amino-acid sequence, 601 residues long: Oligoendopeptidase F homolog (601 aa).

His-387 contacts Zn(2+). Residue Glu-388 is part of the active site. His-391 and His-394 together coordinate Zn(2+).

Belongs to the peptidase M3 family. The cofactor is Zn(2+).

In terms of biological role, hydrolyzes peptides containing between 7 and 17 amino acids with a rather wide specificity. The protein is Oligoendopeptidase F homolog (pepF) of Lactococcus lactis subsp. lactis (strain IL1403) (Streptococcus lactis).